A 379-amino-acid chain; its full sequence is Probable G-protein coupled receptor No18 (379 aa).

The Extracellular segment spans residues 5–36 (EASITGRTAPELNASAAPLDDERELGETVAAT). Asn17 carries an N-linked (GlcNAc...) asparagine glycan. The chain crosses the membrane as a helical span at residues 37–58 (ALLLAIILVTIVGNSLVIISVF). The Cytoplasmic segment spans residues 59–68 (TYRPLRSVQN). Residues 69–90 (FFVVSLAVADLTVALFVLPLNV) traverse the membrane as a helical segment. Residues 91-107 (AYRLLNQWLLGSYLCQM) lie on the Extracellular side of the membrane. Cys105 and Cys184 are oxidised to a cystine. A helical membrane pass occupies residues 108 to 128 (WLTCDILCCTSSILNLCVIAL). The Cytoplasmic segment spans residues 129 to 148 (DRYWAITDPINYAQKRTIRR). A helical membrane pass occupies residues 149 to 171 (VNTMIAAVWALSLVISVPPLLGW). Residues 172 to 196 (NDWPAQFTEDTPCTLTQERLFVVYS) are Extracellular-facing. The chain crosses the membrane as a helical span at residues 197–218 (SSGSFFIPLIIMSVVYAKIFFA). At 219–303 (TKRRLRERTR…LSKERKAARV (85 aa)) the chain is on the cytoplasmic side. The segment at 234–276 (AVPAPPQRTSSRPLAELESVASQEDETEPSPEPEPLSSRADKP) is disordered. The helical transmembrane segment at 304–325 (LGVIMGVFVVCWLPFFLMYAIV) threads the bilayer. Residues 326-340 (PFCTNCAPPSQRVVD) lie on the Extracellular side of the membrane. The chain crosses the membrane as a helical span at residues 341 to 362 (FVTWLGYVNSSLNPIIYTIYNK). Over 363–375 (DFRTAFSRLLRCD) the chain is Cytoplasmic.

This sequence belongs to the G-protein coupled receptor 1 family.

The protein resides in the cell membrane. Its function is as follows. Probable G-protein coupled receptor for an amine. This Amphibalanus amphitrite (Striped barnacle) protein is Probable G-protein coupled receptor No18.